The sequence spans 161 residues: Allophycocyanin alpha subunit (161 aa).

Position 81 (C81) interacts with (2R,3E)-phycocyanobilin.

Belongs to the phycobiliprotein family. In terms of assembly, heterodimer of an alpha and a beta chain. Contains one covalently linked phycocyanobilin chromophore. The chromophore on position 81 is added by the phycocyanobilin lyase CpcUS.

The protein localises to the cellular thylakoid membrane. In terms of biological role, light-harvesting photosynthetic bile pigment-protein from the phycobiliprotein complex. Allophycocyanin has a maximum absorption at approximately 650 nanometers. The sequence is that of Allophycocyanin alpha subunit (apcA) from Picosynechococcus sp. (strain ATCC 27264 / PCC 7002 / PR-6) (Agmenellum quadruplicatum).